The primary structure comprises 1304 residues: Neuronal cell adhesion molecule (1304 aa).

The first 24 residues, 1–24 (MQLKIMPKKKRLSAGRVPLILFLC), serve as a signal peptide directing secretion. Over 25–1167 (QMISALEVPL…ASRQVDIATQ (1143 aa)) the chain is Extracellular. Ig-like domains follow at residues 46-134 (PTIT…AAVS) and 141-235 (PSRS…QPIS). Cystine bridges form between Cys68/Cys123 and Cys167/Cys218. Asn83 carries N-linked (GlcNAc...) asparagine glycosylation. Residues Asn223, Asn245, Asn251, Asn276, and Asn314 are each glycosylated (N-linked (GlcNAc...) asparagine). Ig-like domains lie at 267–356 (PPTF…ISVR), 361–448 (PYWI…AFVN), 454–541 (PRIL…VHLE), and 545–632 (PTWI…AVLS). Disulfide bonds link Cys292–Cys340 and Cys382–Cys432. N-linked (GlcNAc...) asparagine glycans are attached at residues Asn433 and Asn507. 2 cysteine pairs are disulfide-bonded: Cys476–Cys525 and Cys567–Cys616. 3 N-linked (GlcNAc...) asparagine glycosylation sites follow: Asn619, Asn716, and Asn802. 5 Fibronectin type-III domains span residues 649-744 (PPFD…TKAS), 746-843 (PDKN…SGED), 848-950 (APGN…TPEG), 954-1051 (APSS…VDEA), and 1064-1156 (QAVN…TGPA). Residue Asn858 is glycosylated (N-linked (GlcNAc...) (complex) asparagine). N-linked (GlcNAc...) asparagine glycans are attached at residues Asn993, Asn1009, Asn1019, Asn1072, Asn1083, and Asn1115. The chain crosses the membrane as a helical span at residues 1168–1190 (GWFIGLMCAVALLILILLIVCFI). Over 1191-1304 (RRNKGGKYPV…SPVNAMNSFV (114 aa)) the chain is Cytoplasmic. Residues 1199–1219 (PVKEKEDAHADPEIQPMKEDD) are compositionally biased toward basic and acidic residues. The tract at residues 1199-1304 (PVKEKEDAHA…SPVNAMNSFV (106 aa)) is disordered. The residue at position 1221 (Thr1221) is a Phosphothreonine. Tyr1225 carries the phosphotyrosine modification. A Phosphoserine modification is found at Ser1226. The segment covering 1241–1250 (PSDRTVKKED) has biased composition (basic and acidic residues). Ser1251, Ser1254, Ser1271, Ser1290, Ser1291, and Ser1295 each carry phosphoserine. Polar residues predominate over residues 1288-1304 (NESSEAPSPVNAMNSFV).

This sequence belongs to the immunoglobulin superfamily. L1/neurofascin/NgCAM family. Constituent of a NFASC/NRCAM/ankyrin-G complex. Detected in a complex with CNTN1 and PTPRB. Interacts with GLDN/gliomedin. Interacts with MYOC. Detected in all the examined tissues. In the brain it was detected in the amygdala, caudate nucleus, corpus callosum, hippocampus, hypothalamus, substantia nigra, subthalamic nucleus and thalamus.

It is found in the cell membrane. The protein localises to the cell projection. Its subcellular location is the axon. The protein resides in the secreted. Cell adhesion protein that is required for normal responses to cell-cell contacts in brain and in the peripheral nervous system. Plays a role in neurite outgrowth in response to contactin binding. Plays a role in mediating cell-cell contacts between Schwann cells and axons. Plays a role in the formation and maintenance of the nodes of Ranvier on myelinated axons. Nodes of Ranvier contain clustered sodium channels that are crucial for the saltatory propagation of action potentials along myelinated axons. During development, nodes of Ranvier are formed by the fusion of two heminodes. Required for normal clustering of sodium channels at heminodes; not required for the formation of mature nodes with normal sodium channel clusters. Required, together with GLDN, for maintaining NFASC and sodium channel clusters at mature nodes of Ranvier. This is Neuronal cell adhesion molecule (NRCAM) from Homo sapiens (Human).